Consider the following 30-residue polypeptide: Natriuretic peptides A (30 aa).

The propeptide occupies 1–3; that stretch reads APR. A disulfide bridge connects residues cysteine 11 and cysteine 27.

It belongs to the natriuretic peptide family. Post-translationally, cleaved upon secretion to produce the functional hormone.

The protein resides in the secreted. Its function is as follows. Hormone playing a key role in cardiovascular homeostasis through regulation of natriuresis, diuresis, and vasodilation. Has a cGMP-stimulating activity. The protein is Natriuretic peptides A of Pelophylax ridibundus (Marsh frog).